A 169-amino-acid polypeptide reads, in one-letter code: Peptide deformylase (169 aa).

The Fe cation site is built by Cys91 and His133. The active site involves Glu134. His137 contributes to the Fe cation binding site.

This sequence belongs to the polypeptide deformylase family. The cofactor is Fe(2+).

The enzyme catalyses N-terminal N-formyl-L-methionyl-[peptide] + H2O = N-terminal L-methionyl-[peptide] + formate. Its function is as follows. Removes the formyl group from the N-terminal Met of newly synthesized proteins. Requires at least a dipeptide for an efficient rate of reaction. N-terminal L-methionine is a prerequisite for activity but the enzyme has broad specificity at other positions. The chain is Peptide deformylase from Haemophilus influenzae (strain 86-028NP).